The chain runs to 140 residues: MERKVDHFQMTYQSFKDLSIKAKLSYTFNWFGDYSSGGFTAKKGDKHYFDLFLKIKPDPNKSFKAANFKTEEKNSTAIDGQETTRNLEWIEFGASISWSLKGKDDASEKSVKQFLDSYANNTSGYSSDINLFSYLEYLIR.

It belongs to the MG439/MG440 family.

This is an uncharacterized protein from Mycoplasma pneumoniae (strain ATCC 29342 / M129 / Subtype 1) (Mycoplasmoides pneumoniae).